Here is a 425-residue protein sequence, read N- to C-terminus: Synaptotagmin-4 (425 aa).

The Vesicular segment spans residues 1 to 16 (MAPITTSRVEFDEIPT). A helical transmembrane segment spans residues 17 to 37 (VVGIFSAFGLVFTVSLFAWIC). The Cytoplasmic segment spans residues 38 to 425 (CQRRSAKSNK…IAKWHMLCDG (388 aa)). Disordered stretches follow at residues 102–121 (NGNFPKTNPKAGSSSDLENV) and 126–147 (FPETEKEAVSPESLKSSTSLTS). The segment covering 105 to 119 (FPKTNPKAGSSSDLE) has biased composition (polar residues). Ser-135 is subject to Phosphoserine; by MAPK8. Low complexity predominate over residues 137 to 146 (ESLKSSTSLT). C2 domains are found at residues 153–274 (KLGT…MLMT) and 287–420 (GRGE…AKWH). Residues Asp-246, Ser-249, and Asp-252 each coordinate Ca(2+).

Belongs to the synaptotagmin family. In terms of assembly, interacts with KIF1A; the interaction increases in presence of calcium and decreases when SYT4 is phosphorylated at Ser-135. Ca(2+) is required as a cofactor. In terms of processing, phosphorylation at Ser-135 by MAPK8/JNK1 reduces interaction with KIF1A and neuronal dense core vesicles mobility. In terms of tissue distribution, widely expressed. Expressed in the brain. Expressed in pituitary gland, cerebellum, cortex, hypothalamus and hippocampus.

The protein resides in the cytoplasmic vesicle. It localises to the secretory vesicle. It is found in the neuronal dense core vesicle membrane. Functionally, synaptotagmin family member which does not bind Ca(2+). Involved in neuronal dense core vesicles (DCVs) mobility through its interaction with KIF1A. Upon increased neuronal activity, phosphorylation by MAPK8/JNK1 destabilizes the interaction with KIF1A and captures DCVs to synapses. Plays a role in dendrite formation by melanocytes. In Rattus norvegicus (Rat), this protein is Synaptotagmin-4 (Syt4).